The primary structure comprises 64 residues: Large ribosomal subunit protein bL33 (64 aa).

Residues 16-25 (EARTSSEPRR) show a composition bias toward basic and acidic residues. The segment at 16 to 41 (EARTSSEPRRSNGVSRYTTEKNKRNT) is disordered.

The protein belongs to the bacterial ribosomal protein bL33 family.

This chain is Large ribosomal subunit protein bL33, found in Prochlorococcus marinus subsp. pastoris (strain CCMP1986 / NIES-2087 / MED4).